Consider the following 384-residue polypeptide: MKVTSLDGRQLRKMLRKEAAARCVVLDCRPYLAFAASNVRGSLNVNLNSVVLRRARGGAVSARYVLPDEAARARLLQEGGGGVAAVVVLDQGSRHWQKLREESAARVVLTSLLACLPAGPRVYFLKGGYETFYSEYPECCVDVKPISQEKIESERALISQCGKPVVNVSYRPAYDQGGPVEILPFLYLGSAYHASKCEFLANLHITALLNVSRRTSEACATHLHYKWIPVEDSHTADISSHFQEAIDFIDCVREKGGKVLVHCEAGISRSPTICMAYLMKTKQFRLKEAFDYIKQRRSMVSPNFGFMGQLLQYESEILPSTPNPQPPSCQGEAAGSSLIGHLQTLSPDMQGAYCTFPASVLAPVPTHSTVSELSRSPVATATSC.

Positions 19–141 constitute a Rhodanese domain; that stretch reads AAARCVVLDC…FYSEYPECCV (123 aa). A Nuclear localization signal motif is present at residues 53 to 74; that stretch reads RRARGGAVSARYVLPDEAARAR. Positions 178–319 constitute a Tyrosine-protein phosphatase domain; the sequence is GPVEILPFLY…LLQYESEILP (142 aa). Cys-263 functions as the Phosphocysteine intermediate in the catalytic mechanism.

This sequence belongs to the protein-tyrosine phosphatase family. Non-receptor class dual specificity subfamily.

It localises to the nucleus. It carries out the reaction O-phospho-L-tyrosyl-[protein] + H2O = L-tyrosyl-[protein] + phosphate. The enzyme catalyses O-phospho-L-seryl-[protein] + H2O = L-seryl-[protein] + phosphate. It catalyses the reaction O-phospho-L-threonyl-[protein] + H2O = L-threonyl-[protein] + phosphate. Its function is as follows. Dual specificity protein phosphatase; active with phosphotyrosine, phosphoserine and phosphothreonine residues. The highest relative activity is toward ERK1. The polypeptide is Dual specificity protein phosphatase 5 (DUSP5) (Homo sapiens (Human)).